The primary structure comprises 195 residues: uncharacterized protein (195 aa).

The interval 86–158 is disordered; sequence LPSEGGWTSG…PAPVSGEPPE (73 aa).

This is an uncharacterized protein from Homo sapiens (Human).